We begin with the raw amino-acid sequence, 475 residues long: GTPase Der (475 aa).

2 EngA-type G domains span residues 2-166 (LRIA…NIPE) and 213-386 (LKIA…ETVS). GTP is bound by residues 8 to 15 (GRPNVGKS), 55 to 59 (DTGGV), 118 to 121 (NKAD), 219 to 226 (GRPNVGKS), 266 to 270 (DTAGL), and 331 to 334 (NKWD). Residues 387–471 (RKVPTPVVNK…PFDLEIKEKA (85 aa)) enclose the KH-like domain.

This sequence belongs to the TRAFAC class TrmE-Era-EngA-EngB-Septin-like GTPase superfamily. EngA (Der) GTPase family. Associates with the 50S ribosomal subunit.

Its function is as follows. GTPase that plays an essential role in the late steps of ribosome biogenesis. In Chlamydia felis (strain Fe/C-56) (Chlamydophila felis), this protein is GTPase Der.